Here is a 505-residue protein sequence, read N- to C-terminus: Probable alpha-L-arabinofuranosidase C (505 aa).

N-linked (GlcNAc...) asparagine glycosylation is found at N152, N181, and N269.

It belongs to the glycosyl hydrolase 51 family.

The protein resides in the secreted. It catalyses the reaction Hydrolysis of terminal non-reducing alpha-L-arabinofuranoside residues in alpha-L-arabinosides.. The protein operates within glycan metabolism; L-arabinan degradation. In terms of biological role, alpha-L-arabinofuranosidase involved in the degradation of arabinoxylan, a major component of plant hemicellulose. Acts only on small linear 1,5-alpha-linked L-arabinofuranosyl oligosaccharides. The polypeptide is Probable alpha-L-arabinofuranosidase C (abfC) (Aspergillus niger (strain ATCC MYA-4892 / CBS 513.88 / FGSC A1513)).